The primary structure comprises 257 residues: Glutamate racemase (257 aa).

Substrate is bound by residues 12–13 and 44–45; these read DS and YG. Cysteine 75 acts as the Proton donor/acceptor in catalysis. Residue 76 to 77 participates in substrate binding; that stretch reads NT. Cysteine 185 functions as the Proton donor/acceptor in the catalytic mechanism. 186 to 187 is a substrate binding site; it reads TH.

Belongs to the aspartate/glutamate racemases family.

It catalyses the reaction L-glutamate = D-glutamate. It participates in cell wall biogenesis; peptidoglycan biosynthesis. Functionally, provides the (R)-glutamate required for cell wall biosynthesis. In Clostridium botulinum (strain Langeland / NCTC 10281 / Type F), this protein is Glutamate racemase.